The following is a 415-amino-acid chain: Histidine--tRNA ligase (415 aa).

The protein belongs to the class-II aminoacyl-tRNA synthetase family. As to quaternary structure, homodimer.

The protein localises to the cytoplasm. It catalyses the reaction tRNA(His) + L-histidine + ATP = L-histidyl-tRNA(His) + AMP + diphosphate + H(+). The polypeptide is Histidine--tRNA ligase (Rickettsia bellii (strain RML369-C)).